A 130-amino-acid chain; its full sequence is Small ribosomal subunit protein uS9 (130 aa).

The interval 98–130 is disordered; it reads LKRAGLLTRDPRMKERKKPGLKKARRSPQFSKR. A compositionally biased stretch (basic residues) spans 111–130; sequence KERKKPGLKKARRSPQFSKR.

This sequence belongs to the universal ribosomal protein uS9 family.

In Staphylococcus carnosus (strain TM300), this protein is Small ribosomal subunit protein uS9 (rpsI).